The chain runs to 197 residues: A-kinase anchor protein 14 (197 aa).

Composition is skewed to polar residues over residues 1-11 (MSETQNSTSQK) and 19-29 (AASQTMPNTQD). A disordered region spans residues 1–29 (MSETQNSTSQKAMDEDNKAASQTMPNTQD). An RII-binding region spans residues 35 to 52 (ELTQVALALVEDVINYAV).

As to quaternary structure, binds to type II regulatory subunits (RII). In terms of tissue distribution, present in cilia (at protein level). Expressed in tissues containing axoneme-based organelles (cilia and/or flagella): trachea and testis. Highly expressed in airway cilia.

Its subcellular location is the cytoplasm. Its function is as follows. Binds to type II regulatory subunits of protein kinase A and anchors/targets them. The polypeptide is A-kinase anchor protein 14 (AKAP14) (Homo sapiens (Human)).